A 172-amino-acid polypeptide reads, in one-letter code: Adenine phosphoribosyltransferase (172 aa).

Belongs to the purine/pyrimidine phosphoribosyltransferase family. In terms of assembly, homodimer.

The protein resides in the cytoplasm. The catalysed reaction is AMP + diphosphate = 5-phospho-alpha-D-ribose 1-diphosphate + adenine. It functions in the pathway purine metabolism; AMP biosynthesis via salvage pathway; AMP from adenine: step 1/1. Functionally, catalyzes a salvage reaction resulting in the formation of AMP, that is energically less costly than de novo synthesis. In Exiguobacterium sibiricum (strain DSM 17290 / CCUG 55495 / CIP 109462 / JCM 13490 / 255-15), this protein is Adenine phosphoribosyltransferase.